The following is a 307-amino-acid chain: L-carnitine dehydrogenase (307 aa).

8-13 is an NAD(+) binding site; that stretch reads GTGVIG.

It belongs to the 3-hydroxyacyl-CoA dehydrogenase family. L-carnitine dehydrogenase subfamily. In terms of assembly, homodimer.

It localises to the cytoplasm. It catalyses the reaction carnitine + NAD(+) = 3-dehydrocarnitine + NADH + H(+). It functions in the pathway amine and polyamine metabolism; carnitine metabolism. Catalyzes the NAD(+)-dependent oxidation of L-carnitine to 3-dehydrocarnitine. This is L-carnitine dehydrogenase from Oceanobacillus iheyensis (strain DSM 14371 / CIP 107618 / JCM 11309 / KCTC 3954 / HTE831).